The sequence spans 221 residues: UPF0758 protein YicR (221 aa).

The region spanning Ala99–Ile221 is the MPN domain. Zn(2+)-binding residues include His170, His172, and Asp183. Residues His170–Asp183 carry the JAMM motif motif.

It belongs to the UPF0758 family. YicR subfamily.

The chain is UPF0758 protein YicR from Salmonella agona (strain SL483).